Consider the following 373-residue polypeptide: Asporin (373 aa).

The first 15 residues, 1-15 (MKEYVMLLLLAVCSA), serve as a signal peptide directing secretion. Residues 16–32 (KPFFSPSHTALKNMMLK) constitute a propeptide that is removed on maturation. A glycan (O-linked (GalNAc...) serine) is linked at Ser-48. The region spanning 59-95 (FFPFDLFPTCPFGCQCYSRVVHCSDLGLTSVPNNIPF) is the LRRNT domain. Intrachain disulfides connect Cys-68–Cys-74 and Cys-72–Cys-81. 11 LRR repeats span residues 96–117 (DTRM…DFKG), 120–141 (SLYA…TFLT), 144–166 (KLRR…PKSL), 167–186 (AELR…TFKG), 189–212 (ALHV…AFEG), 235–255 (TLLE…EDLK), 259–280 (ELQR…TFAN), 283–305 (RVRE…QELK), 306–327 (YLQI…DFCP), 328–349 (TVPK…PMKY), and 350–373 (WEIQ…NVGK). The interval 159 to 205 (PLNLPKSLAELRIHDNKVKKIQKDTFKGMNALHVLEMSANPLENNGI) is interaction with TGFB1. The N-linked (GlcNAc...) asparagine glycan is linked to Asn-275. Cys-326 and Cys-359 are joined by a disulfide.

It belongs to the small leucine-rich proteoglycan (SLRP) family. SLRP class I subfamily. As to quaternary structure, interacts with type I collagen. DCN can inhibit collagen binding. Interacts with TGFB1, TGFB2 and TGFB3. DCN, BGN, and FMOD inhibit binding to TGFB1. Interacts with BMP2. Interacts in vitro with type II collagen. As to expression, higher expression in heart, also detected in kidney, stomach, testes, and skin but only weakly in lung, skeletal muscle, small intestine, and thymus. Expressed specifically and predominantly in the periodontal ligament (PDL). During tooth development, strong expression is seen in the dental follicle, which is the progenitor tissue that forms cementum, alveolar bone, and the PDL. Expressed in the perichondria of the maxilla, mandible, vertebrae, and long bones. Predominantly expressed in the perichondrium/periosteum of long bones (at protein level).

Its subcellular location is the secreted. It is found in the extracellular space. The protein resides in the extracellular matrix. In terms of biological role, binds calcium and plays a role in osteoblast-driven collagen biomineralization activity. Critical regulator of TGF-beta in articular cartilage and plays an essential role in cartilage homeostasis and osteoarthritis (OA) pathogenesis. Negatively regulates chondrogenesis in the articular cartilage by blocking the TGF-beta/receptor interaction on the cell surface and inhibiting the canonical TGF-beta/Smad signal. Negatively regulates periodontal ligament (PDL) differentiation and mineralization to ensure that the PDL is not ossified and to maintain homeostasis of the tooth-supporting system. Inhibits BMP2-induced cytodifferentiation of PDL cells by preventing its binding to BMPR1B/BMP type-1B receptor, resulting in inhibition of BMP-dependent activation of SMAD proteins. Inhibits the interaction between TGFB1 and TGF-beta receptor type II in the presence of heparin/heparan sulfate in vitro. In Mus musculus (Mouse), this protein is Asporin (Aspn).